Consider the following 554-residue polypeptide: Glutamine--tRNA ligase (554 aa).

The 'HIGH' region signature appears at 34 to 44; sequence PEPNGYLHIGH. Residues 35-37 and 41-47 contribute to the ATP site; these read EPN and HIGHAKS. L-glutamine-binding residues include Asp-67 and Tyr-212. ATP-binding positions include Thr-231, 261–262, and 269–271; these read RL and MSK. The 'KMSKS' region signature appears at 268-272; sequence VMSKR. The tract at residues 317–324 is interaction with tRNA; the sequence is TKQDNTIE.

The protein belongs to the class-I aminoacyl-tRNA synthetase family. In terms of assembly, monomer.

The protein localises to the cytoplasm. It catalyses the reaction tRNA(Gln) + L-glutamine + ATP = L-glutaminyl-tRNA(Gln) + AMP + diphosphate. The chain is Glutamine--tRNA ligase from Shigella flexneri serotype 5b (strain 8401).